Reading from the N-terminus, the 87-residue chain is Large ribosomal subunit protein bL31B (87 aa).

This sequence belongs to the bacterial ribosomal protein bL31 family. Type B subfamily. In terms of assembly, part of the 50S ribosomal subunit.

This chain is Large ribosomal subunit protein bL31B, found in Escherichia coli O9:H4 (strain HS).